Here is a 338-residue protein sequence, read N- to C-terminus: Phenylalanine--tRNA ligase alpha subunit (338 aa).

Glu-252 contacts Mg(2+).

This sequence belongs to the class-II aminoacyl-tRNA synthetase family. Phe-tRNA synthetase alpha subunit type 1 subfamily. Tetramer of two alpha and two beta subunits. Mg(2+) is required as a cofactor.

The protein resides in the cytoplasm. The catalysed reaction is tRNA(Phe) + L-phenylalanine + ATP = L-phenylalanyl-tRNA(Phe) + AMP + diphosphate + H(+). This Pseudomonas putida (strain ATCC 700007 / DSM 6899 / JCM 31910 / BCRC 17059 / LMG 24140 / F1) protein is Phenylalanine--tRNA ligase alpha subunit.